The primary structure comprises 180 residues: uncharacterized protein (180 aa).

Residues 3 to 33 (QQQSNNSNDNKEQLDRVIESLNRVNSETKQI) adopt a coiled-coil conformation.

This is an uncharacterized protein from Acanthamoeba polyphaga (Amoeba).